The sequence spans 449 residues: XK-related protein 2 (449 aa).

The next 10 helical transmembrane spans lie at F35–V55, T68–V88, L98–I118, I174–S194, V202–L222, L241–F261, A269–W289, V306–C326, L357–N377, and L382–F402.

The protein belongs to the XK family. As to expression, expressed predominantly in the placenta, in syncytiotrophoblasts. Moderate levels in the adrenal gland, low levels in the trachea and very low levels in the bone marrow.

The protein resides in the cell membrane. The protein is XK-related protein 2 (XKRX) of Homo sapiens (Human).